A 257-amino-acid polypeptide reads, in one-letter code: Nickel import system ATP-binding protein NikD (257 aa).

The 242-residue stretch at Ile4–Ile245 folds into the ABC transporter domain. Gly37–Ser44 lines the ATP pocket.

It belongs to the ABC transporter superfamily. As to quaternary structure, the complex is composed of two ATP-binding proteins (NikD and NikE), two transmembrane proteins (NikB and NikC) and a solute-binding protein (NikA).

It is found in the cell membrane. It catalyses the reaction Ni(2+)(out) + ATP + H2O = Ni(2+)(in) + ADP + phosphate + H(+). Functionally, part of the ABC transporter complex NikABCDE (Opp2) involved in nickel import. Probably responsible for energy coupling to the transport system. The polypeptide is Nickel import system ATP-binding protein NikD (Staphylococcus aureus (strain MSSA476)).